Here is a 739-residue protein sequence, read N- to C-terminus: Phosphoribosylformylglycinamidine synthase subunit PurL (739 aa).

The active site involves H54. Residues Y57 and K96 each coordinate ATP. E98 contacts Mg(2+). Substrate-binding positions include 99-102 (SHNH) and R121. H100 (proton acceptor) is an active-site residue. D122 lines the Mg(2+) pocket. Residue Q245 participates in substrate binding. D273 is a Mg(2+) binding site. Substrate is bound at residue 317–319 (ESQ). 2 residues coordinate ATP: D500 and G537. N538 serves as a coordination point for Mg(2+). S540 contributes to the substrate binding site.

This sequence belongs to the FGAMS family. In terms of assembly, monomer. Part of the FGAM synthase complex composed of 1 PurL, 1 PurQ and 2 PurS subunits.

It is found in the cytoplasm. It catalyses the reaction N(2)-formyl-N(1)-(5-phospho-beta-D-ribosyl)glycinamide + L-glutamine + ATP + H2O = 2-formamido-N(1)-(5-O-phospho-beta-D-ribosyl)acetamidine + L-glutamate + ADP + phosphate + H(+). The protein operates within purine metabolism; IMP biosynthesis via de novo pathway; 5-amino-1-(5-phospho-D-ribosyl)imidazole from N(2)-formyl-N(1)-(5-phospho-D-ribosyl)glycinamide: step 1/2. In terms of biological role, part of the phosphoribosylformylglycinamidine synthase complex involved in the purines biosynthetic pathway. Catalyzes the ATP-dependent conversion of formylglycinamide ribonucleotide (FGAR) and glutamine to yield formylglycinamidine ribonucleotide (FGAM) and glutamate. The FGAM synthase complex is composed of three subunits. PurQ produces an ammonia molecule by converting glutamine to glutamate. PurL transfers the ammonia molecule to FGAR to form FGAM in an ATP-dependent manner. PurS interacts with PurQ and PurL and is thought to assist in the transfer of the ammonia molecule from PurQ to PurL. This chain is Phosphoribosylformylglycinamidine synthase subunit PurL, found in Bacillus anthracis (strain A0248).